The following is an 879-amino-acid chain: Translation initiation factor IF-2 (879 aa).

2 disordered regions span residues 45–216 (AGHM…ERKR) and 228–293 (SYEE…EKPV). Composition is skewed to basic and acidic residues over residues 60 to 72 (NAAK…DKNS), 83 to 99 (RKTD…KISP), and 107 to 163 (AEKK…ERLQ). Over residues 164-173 (MEAALQAQMQ) the composition is skewed to low complexity. Composition is skewed to basic and acidic residues over residues 174–216 (EQER…ERKR), 228–271 (SYEE…ERRN), and 280–291 (RNNDNKKGKFEK). Positions 380–549 (VRAPVVTIMG…LIQAEMLELT (170 aa)) constitute a tr-type G domain. The tract at residues 389–396 (GHVDHGKT) is G1. 389–396 (GHVDHGKT) provides a ligand contact to GTP. The tract at residues 414–418 (GITQH) is G2. Positions 435 to 438 (DTPG) are G3. GTP contacts are provided by residues 435 to 439 (DTPGH) and 489 to 492 (NKMD). The interval 489 to 492 (NKMD) is G4. The tract at residues 525–527 (SAK) is G5.

This sequence belongs to the TRAFAC class translation factor GTPase superfamily. Classic translation factor GTPase family. IF-2 subfamily.

It localises to the cytoplasm. In terms of biological role, one of the essential components for the initiation of protein synthesis. Protects formylmethionyl-tRNA from spontaneous hydrolysis and promotes its binding to the 30S ribosomal subunits. Also involved in the hydrolysis of GTP during the formation of the 70S ribosomal complex. The polypeptide is Translation initiation factor IF-2 (Dichelobacter nodosus (strain VCS1703A)).